Consider the following 345-residue polypeptide: Uroporphyrinogen decarboxylase (345 aa).

Substrate-binding positions include R27–R31, F46, D76, Y152, S207, and H321.

This sequence belongs to the uroporphyrinogen decarboxylase family. Homodimer.

The protein localises to the cytoplasm. It carries out the reaction uroporphyrinogen III + 4 H(+) = coproporphyrinogen III + 4 CO2. Its pathway is porphyrin-containing compound metabolism; protoporphyrin-IX biosynthesis; coproporphyrinogen-III from 5-aminolevulinate: step 4/4. Catalyzes the decarboxylation of four acetate groups of uroporphyrinogen-III to yield coproporphyrinogen-III. The sequence is that of Uroporphyrinogen decarboxylase from Staphylococcus aureus (strain USA300 / TCH1516).